The following is a 273-amino-acid chain: 4-hydroxy-tetrahydrodipicolinate reductase (273 aa).

NAD(+)-binding positions include 8–13 (GCAGNM), glutamate 34, 102–104 (GTT), and 128–131 (SPNM). The Proton donor/acceptor role is filled by histidine 161. Histidine 162 contacts (S)-2,3,4,5-tetrahydrodipicolinate. Lysine 165 functions as the Proton donor in the catalytic mechanism. Residue 171–172 (GT) coordinates (S)-2,3,4,5-tetrahydrodipicolinate.

This sequence belongs to the DapB family.

Its subcellular location is the cytoplasm. The enzyme catalyses (S)-2,3,4,5-tetrahydrodipicolinate + NAD(+) + H2O = (2S,4S)-4-hydroxy-2,3,4,5-tetrahydrodipicolinate + NADH + H(+). It carries out the reaction (S)-2,3,4,5-tetrahydrodipicolinate + NADP(+) + H2O = (2S,4S)-4-hydroxy-2,3,4,5-tetrahydrodipicolinate + NADPH + H(+). The protein operates within amino-acid biosynthesis; L-lysine biosynthesis via DAP pathway; (S)-tetrahydrodipicolinate from L-aspartate: step 4/4. Its function is as follows. Catalyzes the conversion of 4-hydroxy-tetrahydrodipicolinate (HTPA) to tetrahydrodipicolinate. This Methanosphaera stadtmanae (strain ATCC 43021 / DSM 3091 / JCM 11832 / MCB-3) protein is 4-hydroxy-tetrahydrodipicolinate reductase.